The sequence spans 277 residues: Diaminopimelate epimerase (277 aa).

Substrate is bound by residues Asn-15, Gln-48, and Asn-66. Catalysis depends on Cys-75, which acts as the Proton donor. Residues 76-77, Asn-156, Asn-189, and 207-208 contribute to the substrate site; these read GN and ER. Cys-216 serves as the catalytic Proton acceptor. Residue 217 to 218 participates in substrate binding; it reads GS.

This sequence belongs to the diaminopimelate epimerase family. In terms of assembly, homodimer.

It localises to the cytoplasm. It catalyses the reaction (2S,6S)-2,6-diaminopimelate = meso-2,6-diaminopimelate. It participates in amino-acid biosynthesis; L-lysine biosynthesis via DAP pathway; DL-2,6-diaminopimelate from LL-2,6-diaminopimelate: step 1/1. Its function is as follows. Catalyzes the stereoinversion of LL-2,6-diaminopimelate (L,L-DAP) to meso-diaminopimelate (meso-DAP), a precursor of L-lysine and an essential component of the bacterial peptidoglycan. The polypeptide is Diaminopimelate epimerase (Acidiphilium cryptum (strain JF-5)).